Reading from the N-terminus, the 210-residue chain is 3-hexulose-6-phosphate synthase 1 (210 aa).

This sequence belongs to the HPS/KGPDC family. HPS subfamily.

The enzyme catalyses D-ribulose 5-phosphate + formaldehyde = D-arabino-hex-3-ulose 6-phosphate. It participates in one-carbon metabolism; formaldehyde assimilation via RuMP pathway; D-fructose 6-phosphate from D-ribulose 5-phosphate and formaldehyde: step 1/2. In terms of biological role, catalyzes the condensation of ribulose 5-phosphate with formaldehyde to form 3-hexulose 6-phosphate. This Staphylococcus saprophyticus subsp. saprophyticus (strain ATCC 15305 / DSM 20229 / NCIMB 8711 / NCTC 7292 / S-41) protein is 3-hexulose-6-phosphate synthase 1.